A 360-amino-acid chain; its full sequence is Phospho-N-acetylmuramoyl-pentapeptide-transferase (360 aa).

10 consecutive transmembrane segments (helical) span residues 21–41 (YVTFRAILGLMTALMFSLWWG), 74–94 (MGGLLILAGIFISVLLWGDLG), 97–117 (YVWVVLFVLASFGTIGFIDDY), 135–155 (LLQSIAAIVIAVYLYASADTA), 168–188 (VMPQLGAFFIVLVYFTIVGSS), 199–219 (GLAIMPTVMVAAAFALIAYLS), 236–256 (AGELVIVCTAIVGAGLGFLWF), 263–283 (VFMGDVGSLALGAALGAIAVL), 288–308 (ILLVIMGGVFVMETVSVILQV), and 338–358 (VIVRFWIISLFLVLLGLATLK).

It belongs to the glycosyltransferase 4 family. MraY subfamily. Mg(2+) is required as a cofactor.

The protein localises to the cell inner membrane. It catalyses the reaction UDP-N-acetyl-alpha-D-muramoyl-L-alanyl-gamma-D-glutamyl-meso-2,6-diaminopimeloyl-D-alanyl-D-alanine + di-trans,octa-cis-undecaprenyl phosphate = di-trans,octa-cis-undecaprenyl diphospho-N-acetyl-alpha-D-muramoyl-L-alanyl-D-glutamyl-meso-2,6-diaminopimeloyl-D-alanyl-D-alanine + UMP. It participates in cell wall biogenesis; peptidoglycan biosynthesis. In terms of biological role, catalyzes the initial step of the lipid cycle reactions in the biosynthesis of the cell wall peptidoglycan: transfers peptidoglycan precursor phospho-MurNAc-pentapeptide from UDP-MurNAc-pentapeptide onto the lipid carrier undecaprenyl phosphate, yielding undecaprenyl-pyrophosphoryl-MurNAc-pentapeptide, known as lipid I. This is Phospho-N-acetylmuramoyl-pentapeptide-transferase from Shewanella piezotolerans (strain WP3 / JCM 13877).